We begin with the raw amino-acid sequence, 423 residues long: Maintenance of mitochondrial morphology protein 1 (423 aa).

The Lumenal segment spans residues 1–20 (MTIPAPIPDKAESSLSFTQG). A helical transmembrane segment spans residues 21-41 (LLLGQLSIVILIGAFIKFFIF). At 42–423 (GDPPSPDVTA…PGSMPGLSMT (382 aa)) the chain is on the cytoplasmic side. Residues 115–327 (QPESLDWFNV…EPRFQQIELP (213 aa)) enclose the SMP-LTD domain. Disordered stretches follow at residues 332 to 372 (RKKN…KEVE) and 387 to 423 (SLDV…LSMT). Basic and acidic residues predominate over residues 355–372 (RSRDVERDLREEARKEVE).

It belongs to the MMM1 family. Homodimer. Component of the ER-mitochondria encounter structure (ERMES) or MDM complex, composed of MMM1, MDM10, MDM12 and MDM34. An MMM1 homodimer associates with one molecule of MDM12 on each side in a pairwise head-to-tail manner, and the SMP-LTD domains of MMM1 and MDM12 generate a continuous hydrophobic tunnel for phospholipid trafficking.

Its subcellular location is the endoplasmic reticulum membrane. Component of the ERMES/MDM complex, which serves as a molecular tether to connect the endoplasmic reticulum (ER) and mitochondria. Components of this complex are involved in the control of mitochondrial shape and protein biogenesis, and function in nonvesicular lipid trafficking between the ER and mitochondria. The MDM12-MMM1 subcomplex functions in the major beta-barrel assembly pathway that is responsible for biogenesis of all outer membrane beta-barrel proteins, and acts in a late step after the SAM complex. The MDM10-MDM12-MMM1 subcomplex further acts in the TOM40-specific pathway after the action of the MDM12-MMM1 complex. Essential for establishing and maintaining the structure of mitochondria and maintenance of mtDNA nucleoids. This is Maintenance of mitochondrial morphology protein 1 from Botryotinia fuckeliana (strain B05.10) (Noble rot fungus).